The chain runs to 103 residues: Small ribosomal subunit protein uS10 (103 aa).

The protein belongs to the universal ribosomal protein uS10 family. As to quaternary structure, part of the 30S ribosomal subunit.

Functionally, involved in the binding of tRNA to the ribosomes. This Pelodictyon phaeoclathratiforme (strain DSM 5477 / BU-1) protein is Small ribosomal subunit protein uS10.